Consider the following 225-residue polypeptide: Ureidoacrylate amidohydrolase RutB (225 aa).

The active-site Proton acceptor is the Asp22. Lys131 is an active-site residue. The Nucleophile role is filled by Cys164.

This sequence belongs to the isochorismatase family. RutB subfamily.

The catalysed reaction is (Z)-3-ureidoacrylate + H2O + H(+) = (Z)-3-aminoacrylate + NH4(+) + CO2. It carries out the reaction (Z)-3-ureidoacrylate + H2O = (Z)-3-aminoacrylate + carbamate + H(+). The enzyme catalyses (Z)-2-methylureidoacrylate + H2O + H(+) = (Z)-2-methylaminoacrylate + NH4(+) + CO2. Its function is as follows. Hydrolyzes ureidoacrylate to form aminoacrylate and carbamate. The carbamate hydrolyzes spontaneously, thereby releasing one of the nitrogen atoms of the pyrimidine ring as ammonia and one of its carbon atoms as CO2. The protein is Ureidoacrylate amidohydrolase RutB of Caulobacter vibrioides (strain ATCC 19089 / CIP 103742 / CB 15) (Caulobacter crescentus).